A 473-amino-acid chain; its full sequence is Nuclear distribution protein PAC1 (473 aa).

The LisH domain occupies 9–41 (QAEELHKSIIAYFLSAKLPKSAAALREEIADSV). Positions 60-87 (TSVVRLQKKIMDLEARNSALQSELDSAT) form a coiled coil. Polar residues predominate over residues 80–93 (QSELDSATPTSLSR). Residues 80 to 99 (QSELDSATPTSLSRRNQDPV) form a disordered region. WD repeat units follow at residues 113–154 (SHRN…RTIK), 156–196 (HTRA…KNIR), 200–247 (GHDH…CVRT), 250–289 (GHVE…TKST), 292–352 (GHEH…IKTL), 354–393 (GHDN…KCVR), 397–434 (DAHA…ALSG), and 435–472 (VNGI…RVFA).

It belongs to the WD repeat LIS1/nudF family. Self-associates. Interacts with NDL1 and dynein.

It is found in the cytoplasm. The protein resides in the cytoskeleton. Its subcellular location is the spindle pole. Its function is as follows. Positively regulates the activity of the minus-end directed microtubule motor protein dynein. May enhance dynein-mediated microtubule sliding by targeting dynein to the microtubule plus end. Required for nuclear migration during vegetative growth as well as development. Required for retrograde early endosome (EE) transport from the hyphal tip. Required for localization of dynein to the mitotic spindle poles. Recruits additional proteins to the dynein complex at SPBs. The chain is Nuclear distribution protein PAC1 from Ajellomyces dermatitidis (strain ER-3 / ATCC MYA-2586) (Blastomyces dermatitidis).